A 399-amino-acid polypeptide reads, in one-letter code: Elongation factor Tu (399 aa).

The region spanning 10–209 is the tr-type G domain; it reads KPHVNIGTIG…AVDSYIPTPT (200 aa). Residues 19 to 26 form a G1 region; that stretch reads GHVDHGKT. Residue 19–26 participates in GTP binding; the sequence is GHVDHGKT. T26 provides a ligand contact to Mg(2+). Residues 60–64 form a G2 region; sequence GITIA. The interval 81–84 is G3; that stretch reads DCPG. GTP contacts are provided by residues 81–85 and 136–139; these read DCPGH and NKAD. The G4 stretch occupies residues 136–139; it reads NKAD. Residues 174 to 176 form a G5 region; that stretch reads SAL.

Belongs to the TRAFAC class translation factor GTPase superfamily. Classic translation factor GTPase family. EF-Tu/EF-1A subfamily. In terms of assembly, monomer.

It localises to the cytoplasm. The catalysed reaction is GTP + H2O = GDP + phosphate + H(+). GTP hydrolase that promotes the GTP-dependent binding of aminoacyl-tRNA to the A-site of ribosomes during protein biosynthesis. This is Elongation factor Tu from Campylobacter jejuni (strain RM1221).